The chain runs to 554 residues: Glucose-6-phosphate isomerase (554 aa).

Glu-359 acts as the Proton donor in catalysis. Active-site residues include His-390 and Lys-518.

The protein belongs to the GPI family.

It is found in the cytoplasm. It carries out the reaction alpha-D-glucose 6-phosphate = beta-D-fructose 6-phosphate. It participates in carbohydrate biosynthesis; gluconeogenesis. It functions in the pathway carbohydrate degradation; glycolysis; D-glyceraldehyde 3-phosphate and glycerone phosphate from D-glucose: step 2/4. Catalyzes the reversible isomerization of glucose-6-phosphate to fructose-6-phosphate. This chain is Glucose-6-phosphate isomerase, found in Pseudomonas savastanoi pv. phaseolicola (strain 1448A / Race 6) (Pseudomonas syringae pv. phaseolicola (strain 1448A / Race 6)).